The chain runs to 453 residues: Autophagy-related protein 21 (453 aa).

A WD 1 repeat occupies 4–137; sequence LRFNQDASCC…NDQIFIYDIS (134 aa). The segment at 177-207 is disordered; the sequence is GNELDRIRSKSNNNNDQTNSDNGRSRTYSIN. Positions 187-198 are enriched in low complexity; sequence SNNNNDQTNSDN. WD repeat units lie at residues 252–347 and 419–453; these read NLKP…RTDD and FDNK…SHFI. The L/FRRG motif motif lies at 310–314; that stretch reads FRRGS.

This sequence belongs to the WD repeat PROPPIN family.

It localises to the cytoplasm. It is found in the membrane. Its subcellular location is the vacuole membrane. In terms of biological role, required for cytoplasm to vacuole transport (Cvt) vesicles formation and mitophagy. Involved in binding of phosphatidylethanolamine to ATG8 and in recruitment of ATG8 and ATG5 to the pre-autophagosomal structure. Protects ATG8 from ARG4-mediated cleavage. This chain is Autophagy-related protein 21 (ATG21), found in Candida glabrata (strain ATCC 2001 / BCRC 20586 / JCM 3761 / NBRC 0622 / NRRL Y-65 / CBS 138) (Yeast).